The following is a 293-amino-acid chain: Beta-porphyranase B (293 aa).

The N-terminal stretch at 1–21 is a signal peptide; that stretch reads MKLSNQFLITITLLITSITFA. The region spanning 38–291 is the GH16 domain; the sequence is QEWKLIENMS…WVRSWQLVDS (254 aa). The substrate site is built by Trp67, Arg70, Glu156, Glu161, and Glu256. Glu156 functions as the Nucleophile in the catalytic mechanism. The active-site Proton donor is Glu161.

It belongs to the glycosyl hydrolase 16 family.

It localises to the periplasm. It carries out the reaction Hydrolysis of beta-D-galactopyranose-(1-&gt;4)-alpha-L-galactopyranose-6-sulfate linkages in porphyran.. Its function is as follows. Cleaves the sulfated polysaccharide porphyran at the (1-&gt;4) linkages between beta-D-galactopyranose and alpha-L-galactopyranose-6-sulfate, forming mostly the disaccharide alpha-L-galactopyranose-6-sulfate-(1-&gt;3)-beta-D-galactose. Some longer oligosaccharides of even number of residues are also observed. Inactive on the non-sulfated agarose portion of the porphyran backbone. In contrast to PorA, tolerates the presence of 3-6-anhydro-L-galactose in subsite -2. This is Beta-porphyranase B (porB) from Zobellia galactanivorans (strain DSM 12802 / CCUG 47099 / CIP 106680 / NCIMB 13871 / Dsij).